We begin with the raw amino-acid sequence, 171 residues long: MAAMNSSVLTCSYAIAGSGSVELNQKVGLVNSSVGFGQKKQMIMPVIKAQRVVGDDVDGSNGRRSAMVFLAATLFSTAAVSASANAGVIDEYLERSKTNKELNDKKRLATSGANFARAFTVQFGSCKFPENFTGCQDLAKQKKVPFISEDIALECEGKDKYKCGSNVFWKW.

The N-terminal 49 residues, 1–49, are a transit peptide targeting the chloroplast; it reads MAAMNSSVLTCSYAIAGSGSVELNQKVGLVNSSVGFGQKKQMIMPVIKA. A thylakoid-targeting transit peptide spans 50–86; the sequence is QRVVGDDVDGSNGRRSAMVFLAATLFSTAAVSASANA. Residue Gly87 is modified to N-acetylglycine; partial.

The protein belongs to the psaN family. In terms of assembly, interacts with GRF5, GRF7, GRF9 and GRF10. The transit peptide is the site of PSAN that associates with 14-3-3.

It is found in the plastid. The protein localises to the chloroplast thylakoid membrane. Its function is as follows. May function in mediating the binding of the antenna complexes to the PSI reaction center and core antenna. Plays an important role in docking plastocyanin to the PSI complex. Does not bind pigments. The protein is Photosystem I reaction center subunit N, chloroplastic (PSAN) of Arabidopsis thaliana (Mouse-ear cress).